Consider the following 841-residue polypeptide: Probable inorganic carbon transporter subunit DabA 1 (841 aa).

The Zn(2+) site is built by Cys-352, Asp-354, His-536, and Cys-551.

Belongs to the inorganic carbon transporter (TC 9.A.2) DabA family. Forms a complex with DabB. Zn(2+) serves as cofactor.

The protein localises to the cell inner membrane. Functionally, part of an energy-coupled inorganic carbon pump. In Bradyrhizobium sp. (strain ORS 278), this protein is Probable inorganic carbon transporter subunit DabA 1.